A 529-amino-acid polypeptide reads, in one-letter code: uncharacterized protein (529 aa).

The tract at residues 1–20 is disordered; sequence MGADLKQPQDADSPPKGVSR. Positions 1–52 form a signal peptide, tat-type signal; the sequence is MGADLKQPQDADSPPKGVSRRRFLTTGAAAVVGTGVGAGGTALLSSHPRGPA.

Predicted to be exported by the Tat system. The position of the signal peptide cleavage has not been experimentally proven.

This is an uncharacterized protein from Mycobacterium tuberculosis (strain CDC 1551 / Oshkosh).